The primary structure comprises 363 residues: UDP-N-acetylglucosamine--N-acetylmuramyl-(pentapeptide) pyrophosphoryl-undecaprenol N-acetylglucosamine transferase (363 aa).

Residues 10-12 (TGG), asparagine 124, serine 195, isoleucine 250, and glutamine 295 each bind UDP-N-acetyl-alpha-D-glucosamine.

It belongs to the glycosyltransferase 28 family. MurG subfamily.

The protein localises to the cell membrane. The enzyme catalyses di-trans,octa-cis-undecaprenyl diphospho-N-acetyl-alpha-D-muramoyl-L-alanyl-D-glutamyl-meso-2,6-diaminopimeloyl-D-alanyl-D-alanine + UDP-N-acetyl-alpha-D-glucosamine = di-trans,octa-cis-undecaprenyl diphospho-[N-acetyl-alpha-D-glucosaminyl-(1-&gt;4)]-N-acetyl-alpha-D-muramoyl-L-alanyl-D-glutamyl-meso-2,6-diaminopimeloyl-D-alanyl-D-alanine + UDP + H(+). It functions in the pathway cell wall biogenesis; peptidoglycan biosynthesis. Functionally, cell wall formation. Catalyzes the transfer of a GlcNAc subunit on undecaprenyl-pyrophosphoryl-MurNAc-pentapeptide (lipid intermediate I) to form undecaprenyl-pyrophosphoryl-MurNAc-(pentapeptide)GlcNAc (lipid intermediate II). The sequence is that of UDP-N-acetylglucosamine--N-acetylmuramyl-(pentapeptide) pyrophosphoryl-undecaprenol N-acetylglucosamine transferase from Listeria monocytogenes serovar 1/2a (strain ATCC BAA-679 / EGD-e).